A 149-amino-acid chain; its full sequence is Calmodulin-1 (149 aa).

Residue A2 is modified to N-acetylalanine. 4 EF-hand domains span residues 8-43, 44-79, 81-116, and 117-149; these read EQIAEFKEAFSLFDKDGDGTITTKELGTVMRSLGQN, PTEAELQDMINEVDADGNGTIDFPEFLTMMARKMKD, DSEEEIREAFRVFDKDGNGFISAAELRHVMTNLGEK, and LTDEEVDEMIREADIDGDGQVNYEEFVTMMTSK. Residues D21, D23, D25, T27, E32, D57, D59, N61, T63, E68, D94, D96, N98, and E105 each contribute to the Ca(2+) site. K116 carries the N6,N6,N6-trimethyllysine modification. Ca(2+)-binding residues include D130, D132, D134, Q136, and E141.

It belongs to the calmodulin family.

In terms of biological role, calmodulin mediates the control of a large number of enzymes, ion channels and other proteins by Ca(2+). Among the enzymes to be stimulated by the calmodulin-Ca(2+) complex are a number of protein kinases and phosphatases. In Branchiostoma floridae (Florida lancelet), this protein is Calmodulin-1.